The sequence spans 115 residues: Ribonuclease P protein component (115 aa).

It belongs to the RnpA family. Consists of a catalytic RNA component (M1 or rnpB) and a protein subunit.

The enzyme catalyses Endonucleolytic cleavage of RNA, removing 5'-extranucleotides from tRNA precursor.. In terms of biological role, RNaseP catalyzes the removal of the 5'-leader sequence from pre-tRNA to produce the mature 5'-terminus. It can also cleave other RNA substrates such as 4.5S RNA. The protein component plays an auxiliary but essential role in vivo by binding to the 5'-leader sequence and broadening the substrate specificity of the ribozyme. The sequence is that of Ribonuclease P protein component from Symbiobacterium thermophilum (strain DSM 24528 / JCM 14929 / IAM 14863 / T).